The following is a 336-amino-acid chain: tRNA-cytidine(32) 2-sulfurtransferase (336 aa).

The disordered stretch occupies residues 1–42 (MNAPDTLTGLEANAPVTEEAPAASEAERKRAHTRREQKEQYE). The short motif at 75–80 (SGGKDS) is the PP-loop motif element. [4Fe-4S] cluster-binding residues include C150, C153, and C241. The tract at residues 301–328 (PHGDIAFDEEPCSADSASNQTQRPSQTV) is disordered. The segment covering 315–328 (DSASNQTQRPSQTV) has biased composition (polar residues).

The protein belongs to the TtcA family. As to quaternary structure, homodimer. Mg(2+) is required as a cofactor. The cofactor is [4Fe-4S] cluster.

It is found in the cytoplasm. It carries out the reaction cytidine(32) in tRNA + S-sulfanyl-L-cysteinyl-[cysteine desulfurase] + AH2 + ATP = 2-thiocytidine(32) in tRNA + L-cysteinyl-[cysteine desulfurase] + A + AMP + diphosphate + H(+). Its pathway is tRNA modification. Its function is as follows. Catalyzes the ATP-dependent 2-thiolation of cytidine in position 32 of tRNA, to form 2-thiocytidine (s(2)C32). The sulfur atoms are provided by the cysteine/cysteine desulfurase (IscS) system. This chain is tRNA-cytidine(32) 2-sulfurtransferase, found in Paraburkholderia phymatum (strain DSM 17167 / CIP 108236 / LMG 21445 / STM815) (Burkholderia phymatum).